The following is a 108-amino-acid chain: DNA-binding protein HBbu (108 aa).

This sequence belongs to the bacterial histone-like protein family.

In terms of biological role, histone-like DNA-binding protein which is capable of wrapping DNA to stabilize it, and thus to prevent its denaturation under extreme environmental conditions. In Borrelia andersonii (Borreliella andersonii), this protein is DNA-binding protein HBbu (hbb).